The sequence spans 339 residues: DNA-directed RNA polymerase subunit alpha (339 aa).

The segment at 1-235 (MTIQKNWQEL…DQLNVFVNFE (235 aa)) is alpha N-terminal domain (alpha-NTD). Residues 251-339 (FNPAFLKKVD…ELAKRFEDHY (89 aa)) are alpha C-terminal domain (alpha-CTD).

This sequence belongs to the RNA polymerase alpha chain family. In terms of assembly, homodimer. The RNAP catalytic core consists of 2 alpha, 1 beta, 1 beta' and 1 omega subunit. When a sigma factor is associated with the core the holoenzyme is formed, which can initiate transcription.

The catalysed reaction is RNA(n) + a ribonucleoside 5'-triphosphate = RNA(n+1) + diphosphate. In terms of biological role, DNA-dependent RNA polymerase catalyzes the transcription of DNA into RNA using the four ribonucleoside triphosphates as substrates. This chain is DNA-directed RNA polymerase subunit alpha, found in Rhodopseudomonas palustris (strain BisA53).